A 393-amino-acid chain; its full sequence is MKVITAFLSVFVLCSAEDDDKLTVASNDLGMRMLPLLPSSPGENIFFSPYSLSIAMGMAYAGAGGETRQELHENLGYSRAGLPEAEVLDAYARQTQRHLSDPSNTTVDVANTAAIHLGLPLLDEYETILRNSFNADLQKVDFVENGQGAVDVINSWVKDKTHNKIESLFSEPLDPLTRFVLLNAMYFKGTWKTEFQKRRTEQRSFFNGGVTQAQVDTMIGKIRIRHNSFNDVGVDVAELPYRGGDYSMVILLPQEKTGVEALKTNLTAGLFKTLLDRLVQRQVTVFLPKFKFESKYSLKEILQNMGIRRIFGGGADLSGISGDTSLEVYDVVQKAVVEVNEEGTEAAVVSAVIGGLRSGSFDGFEFRVDHPFLFFIRDTRTNAILFVGQVNHL.

A signal peptide spans 1-16; sequence MKVITAFLSVFVLCSA. Residues Asn104 and Asn265 are each glycosylated (N-linked (GlcNAc...) asparagine).

This sequence belongs to the serpin family. Interacts with human KLKB1. Interacts with human ST14. Interacts with human F2 (thrombin). In terms of tissue distribution, saliva (at protein level). Expressed in salivary gland. Expressed in ovary during blood feeding.

Its subcellular location is the secreted. Its function is as follows. Serine protease inhibitor that modulates blood feeding of ticks on vertebrate species. Moderately inhibits host plasma kallikrein (KLKB1), matriptase (ST14), trypsin, plasmin (PLG), thrombin (F2) and coagulation factor VIIa (F7). Slightly inhibits host alpha-chymotrypsin, tPA/tissue-type plasminogen activator (PLAT), uPA/urokinase-type plasminogen activator (PLAU) and coagulation factor XIIa (F12). Slightly inhibits the extrinsic pathway while not affecting the intrinsic and common pathways of host blood coagulation. Decreases synthesis and secretion of IL6 by mouse bone marrow-derived macrophages. Decreases viability of mouse B- and T-cells. Decreases proliferation of mouse CD4+ T-cells in response to stimulation. Inhibits Th1 immune responses in mouse cells. Promotes differentiation of mouse regulatory T-cells. This Ixodes ricinus (Common tick) protein is Iripin-3.